Consider the following 332-residue polypeptide: Oligopeptide transport ATP-binding protein OppF (332 aa).

The region spanning 23 to 264 is the ABC transporter domain; sequence KNDKSLFFAK…TKHPYTKALM (242 aa). 56-63 contributes to the ATP binding site; the sequence is GESGCGKS.

It belongs to the ABC transporter superfamily. As to quaternary structure, the complex is composed of two ATP-binding proteins (OppD and OppF), two transmembrane proteins (OppB and OppC) and a solute-binding protein (OppA).

It is found in the cell inner membrane. It catalyses the reaction a [peptide](out) + ATP + H2O = a [peptide](in) + ADP + phosphate + H(+). Part of the ABC transporter complex OppABCDF involved in the uptake of oligopeptides. Probably responsible for energy coupling to the transport system. This Haemophilus influenzae (strain ATCC 51907 / DSM 11121 / KW20 / Rd) protein is Oligopeptide transport ATP-binding protein OppF (oppF).